Consider the following 557-residue polypeptide: Protein Red (557 aa).

The tract at residues 1 to 84 (MPERDSEPFS…RKKKSYYAKL (84 aa)) is disordered. The segment covering 16–25 (DGHDVDDPHS) has biased composition (basic and acidic residues). The span at 42-53 (TPRAAPTSAPPS) shows a compositional bias: low complexity. N6-acetyllysine occurs at positions 98 and 137. Lys151 participates in a covalent cross-link: Glycyl lysine isopeptide (Lys-Gly) (interchain with G-Cter in SUMO2). Positions 181 to 205 (KEKEEEELMEKPQKETKKDEDPENK) are disordered. Ser287 bears the Phosphoserine mark. Positions 294 to 303 (RNKKLKKKDK) are enriched in basic residues. The segment at 294-402 (RNKKLKKKDK…PIDVDKGPGS (109 aa)) is disordered. Over residues 304-313 (GKLEEKKPPE) the composition is skewed to basic and acidic residues. Glycyl lysine isopeptide (Lys-Gly) (interchain with G-Cter in SUMO2) cross-links involve residues Lys310 and Lys331. Residues 332 to 398 (TPRDKERERY…VDDEPIDVDK (67 aa)) show a composition bias toward basic and acidic residues. Repeat copies occupy residues 342–343 (RE), 344–345 (RE), 346–347 (RD), 348–349 (RE), 350–351 (RD), 352–353 (RD), 354–355 (RD), 356–357 (RE), 358–359 (RE), 360–361 (RE), 362–363 (RD), 364–365 (RE), 366–367 (RE), 368–369 (RE), 370–371 (RD), 372–373 (RE), and 374–375 (RE). A 17 X 2 AA tandem repeats of R-[ED] region spans residues 342–375 (RERERDRERDRDRDRERERERDRERERERDRERE). Glycyl lysine isopeptide (Lys-Gly) (interchain with G-Cter in SUMO2) cross-links involve residues Lys386, Lys388, Lys404, and Lys408. Residues Ser417 and Ser460 each carry the phosphoserine modification. Position 485 is a phosphothreonine (Thr485). Glycyl lysine isopeptide (Lys-Gly) (interchain with G-Cter in SUMO2) cross-links involve residues Lys496, Lys501, and Lys509. Ser536 carries the post-translational modification Phosphoserine. Residues Lys541, Lys543, Lys544, and Lys553 each participate in a glycyl lysine isopeptide (Lys-Gly) (interchain with G-Cter in SUMO2) cross-link.

The protein belongs to the RED family. In terms of assembly, component of the spliceosome B complex. Interacts with SMU1. Interacts with MAD1L1. May interact with DHX15.

Its subcellular location is the nucleus. The protein localises to the nucleoplasm. It is found in the chromosome. It localises to the cytoplasm. The protein resides in the cytoskeleton. Its subcellular location is the spindle pole. Its function is as follows. Involved in pre-mRNA splicing as a component of the spliceosome. Auxiliary spliceosomal protein that regulates selection of alternative splice sites in a small set of target pre-mRNA species. Required for normal mitotic cell cycle progression. Recruits MAD1L1 and MAD2L1 to kinetochores, and is required to trigger the spindle assembly checkpoint. Required for normal accumulation of SMU1. The sequence is that of Protein Red (IK) from Pongo abelii (Sumatran orangutan).